The following is a 135-amino-acid chain: Small ribosomal subunit protein uS8 (135 aa).

The protein belongs to the universal ribosomal protein uS8 family. Part of the 30S ribosomal subunit. Contacts proteins S5 and S12.

In terms of biological role, one of the primary rRNA binding proteins, it binds directly to 16S rRNA central domain where it helps coordinate assembly of the platform of the 30S subunit. The polypeptide is Small ribosomal subunit protein uS8 (Corynebacterium urealyticum (strain ATCC 43042 / DSM 7109)).